A 243-amino-acid polypeptide reads, in one-letter code: Large ribosomal subunit protein uL2 (243 aa).

The segment covering Met1–Arg12 has biased composition (basic residues). Disordered regions lie at residues Met1 to Thr38 and Val198 to Glu243. 2 stretches are compositionally biased toward basic and acidic residues: residues Tyr24–Glu34 and Pro221–Ser231.

The protein belongs to the universal ribosomal protein uL2 family. In terms of assembly, part of the 50S ribosomal subunit. Forms a bridge to the 30S subunit in the 70S ribosome.

Functionally, one of the primary rRNA binding proteins. Required for association of the 30S and 50S subunits to form the 70S ribosome, for tRNA binding and peptide bond formation. It has been suggested to have peptidyltransferase activity; this is somewhat controversial. Makes several contacts with the 16S rRNA in the 70S ribosome. The chain is Large ribosomal subunit protein uL2 from Haloquadratum walsbyi (strain DSM 16790 / HBSQ001).